The following is a 103-amino-acid chain: Nucleoid-associated protein BH0035 (103 aa).

The span at 1–20 (MKNMGQMMKQMQKMQKQMMK) shows a compositional bias: low complexity. The interval 1 to 29 (MKNMGQMMKQMQKMQKQMMKAQEELKEKT) is disordered.

It belongs to the YbaB/EbfC family. As to quaternary structure, homodimer.

It localises to the cytoplasm. It is found in the nucleoid. In terms of biological role, binds to DNA and alters its conformation. May be involved in regulation of gene expression, nucleoid organization and DNA protection. This Halalkalibacterium halodurans (strain ATCC BAA-125 / DSM 18197 / FERM 7344 / JCM 9153 / C-125) (Bacillus halodurans) protein is Nucleoid-associated protein BH0035.